We begin with the raw amino-acid sequence, 717 residues long: Ribosomal RNA large subunit methyltransferase K/L (717 aa).

The region spanning 45 to 142 (GAYRICLGSR…DKRSGVQTVQ (98 aa)) is the THUMP domain.

This sequence belongs to the methyltransferase superfamily. RlmKL family.

Its subcellular location is the cytoplasm. It catalyses the reaction guanosine(2445) in 23S rRNA + S-adenosyl-L-methionine = N(2)-methylguanosine(2445) in 23S rRNA + S-adenosyl-L-homocysteine + H(+). The enzyme catalyses guanosine(2069) in 23S rRNA + S-adenosyl-L-methionine = N(2)-methylguanosine(2069) in 23S rRNA + S-adenosyl-L-homocysteine + H(+). In terms of biological role, specifically methylates the guanine in position 2445 (m2G2445) and the guanine in position 2069 (m7G2069) of 23S rRNA. The polypeptide is Ribosomal RNA large subunit methyltransferase K/L (Hahella chejuensis (strain KCTC 2396)).